The chain runs to 369 residues: MSGNTLGLLFTVTTFGESHGPAIGAVVDGCPPGMSLTEADIQIDLDRRKPGTSRHVTQRQEADQVEILSGVFEGKTTGTPICLLIRNTDQRSKDYGNIVETFRPGHADYTYWHKYGIRDYRGGGRSSARLTAPVVAAAAIAKKWLNEQYGTEIRGYMSQLGEVEVPFTDWKHVPENPFFAANADIVPELETYMDALRRDGDSVGARIEVVASHVPVGLGEPLFDKLDADIAHAMMGINAVKGVEIGAGFDSVSQRGTVHGDELTPEGFRTNNSGGVLGGISTGQDIKVSLAIKPTSSIRTARESIDKAGSPASVETFGRHDPCVGIRATPIAEAMLALVLMDHALRHRAQCGDVRVDTPRIPAQAPGKS.

Arginine 48 and arginine 54 together coordinate NADP(+). FMN is bound by residues 125-127 (RSS), 238-239 (NA), glycine 278, 293-297 (KPTSS), and arginine 319.

It belongs to the chorismate synthase family. Homotetramer. Requires FMNH2 as cofactor.

The enzyme catalyses 5-O-(1-carboxyvinyl)-3-phosphoshikimate = chorismate + phosphate. The protein operates within metabolic intermediate biosynthesis; chorismate biosynthesis; chorismate from D-erythrose 4-phosphate and phosphoenolpyruvate: step 7/7. Catalyzes the anti-1,4-elimination of the C-3 phosphate and the C-6 proR hydrogen from 5-enolpyruvylshikimate-3-phosphate (EPSP) to yield chorismate, which is the branch point compound that serves as the starting substrate for the three terminal pathways of aromatic amino acid biosynthesis. This reaction introduces a second double bond into the aromatic ring system. The sequence is that of Chorismate synthase from Cupriavidus metallidurans (strain ATCC 43123 / DSM 2839 / NBRC 102507 / CH34) (Ralstonia metallidurans).